The sequence spans 450 residues: Chromosomal replication initiator protein DnaA (450 aa).

Residues 1-73 (MNTKELWIEV…KNILKKLTGI (73 aa)) are domain I, interacts with DnaA modulators. Residues 73 to 104 (IQYNISFELEKNINKQASVISKIDTLTENNNL) form a domain II region. The domain III, AAA+ region stretch occupies residues 105 to 326 (AYYENYTFEN…GAIKRLLFLA (222 aa)). The ATP site is built by G149, G151, K152, and T153. The interval 327-450 (VMNKKPNEII…NAIRRKIEGR (124 aa)) is domain IV, binds dsDNA.

This sequence belongs to the DnaA family. Oligomerizes as a right-handed, spiral filament on DNA at oriC.

It localises to the cytoplasm. Its function is as follows. Plays an essential role in the initiation and regulation of chromosomal replication. ATP-DnaA binds to the origin of replication (oriC) to initiate formation of the DNA replication initiation complex once per cell cycle. Binds the DnaA box (a 9 base pair repeat at the origin) and separates the double-stranded (ds)DNA. Forms a right-handed helical filament on oriC DNA; dsDNA binds to the exterior of the filament while single-stranded (ss)DNA is stabiized in the filament's interior. The ATP-DnaA-oriC complex binds and stabilizes one strand of the AT-rich DNA unwinding element (DUE), permitting loading of DNA polymerase. After initiation quickly degrades to an ADP-DnaA complex that is not apt for DNA replication. Binds acidic phospholipids. This Spiroplasma citri protein is Chromosomal replication initiator protein DnaA.